The chain runs to 32 residues: Delta-conotoxin EVIA (32 aa).

3 disulfide bridges follow: cysteine 3/cysteine 21, cysteine 10/cysteine 25, and cysteine 20/cysteine 29. At proline 6 the chain carries 4-hydroxyproline. At leucine 32 the chain carries Leucine amide.

It belongs to the conotoxin O1 superfamily. As to expression, expressed by the venom duct.

The protein resides in the secreted. Functionally, delta-conotoxins bind to site 6 of voltage-gated sodium channels and inhibit the inactivation process. This toxin inhibits sodium channel inactivation in neuronal membranes from amphibians and mammals (Nav1.2a/SCN1A, Nav1.3/SCN3A and Nav1.6/SCN8A) upon binding to receptor site 6. The sequence is that of Delta-conotoxin EVIA from Conus ermineus (Agate cone).